We begin with the raw amino-acid sequence, 415 residues long: MEATEQGPIDVEAVRADFPILEREVAGGEDLVYLDNAATSHTPEPVVDAIADYYRRYNSNVHRGLHELSQEASVAYEDAHDKLAAFVGGEDREEMVFTKNTTEAENLVAFAWGLNELGPGDEVVLTQMEHHASLVTWQQVADETGAEVKYIPITDDGHLDMDAAADMITDDTALVNAVHISNTLGTVNPVGELADIAHDHGAYIFVDGAQAAPTRAVDVQEIDADFYAFSGHKMLGPTGIGCLYGKRHLLAEMEPFLYGGDMIERVSYEDATWNDPPWKFEAGTPVIAQGIALAEAVDYLQDIGMDAIRAHEEALTEYAYDQLTMTDDVDVYGPPGDDRGAVVSFNVDGIHAHDLSSILNDYGVAIRAGDHCTQPLHDTLGVPASARASFYLYNTRDEVDALVAAVDEARQIFAP.

Lysine 233 is modified (N6-(pyridoxal phosphate)lysine). Residue cysteine 372 is the Cysteine persulfide intermediate of the active site.

It belongs to the class-V pyridoxal-phosphate-dependent aminotransferase family. Csd subfamily. It depends on pyridoxal 5'-phosphate as a cofactor.

It carries out the reaction (sulfur carrier)-H + L-cysteine = (sulfur carrier)-SH + L-alanine. This is Probable cysteine desulfurase (csd) from Halobacterium salinarum (strain ATCC 700922 / JCM 11081 / NRC-1) (Halobacterium halobium).